An 818-amino-acid chain; its full sequence is Piwi-like protein (818 aa).

The PAZ domain maps to 220–339; that stretch reads RINRVLNDNS…ITGELCFLCG (120 aa). The Piwi domain maps to 501–800; sequence KIALVFVPDD…LAELIGKVHK (300 aa).

The protein belongs to the argonaute family. Piwi subfamily.

This is Piwi-like protein (iwi) from Dugesia japonica (Planarian).